A 423-amino-acid chain; its full sequence is MKAELIAVGTEILTGQIVNTNAQFLSEKMAELGIDVYFQTAVGDNEERLLSVITTASQRSDLVILCGGLGPTKDDLTKQTLAKYLRKDLVYDEQACQKLDDFFAKRKPSSRTPNNERQAQVIEGSISLPNKTGLAVGGFITVDGISYVVLPGPPSELKPMVNEELVPLLSKQYSTLYSKVLRFFGIGESQLVTVLSDFIENQTDPTIAPYAKTGEVTLRLSTKTENQALADKKLGQLEAQLLSRKTLEGQPLADVFYGYGEDNSLARETFELLVKYDKTITAAESLTAGLFQSTLASFPGASQVFNGGFVTYSMEEKAKMLGLPLEELKSYGVVSAYTAEGMAEQARLLTGADIGVSLTGVAGPDMLEEQPAGTVFIGLATQNKVESIKVLISGRSRLDVCYIATLHAFNMVRKTLLKLENLL.

This sequence belongs to the CinA family.

This chain is Putative competence-damage inducible protein, found in Streptococcus pyogenes serotype M49 (strain NZ131).